The chain runs to 482 residues: G patch domain-containing protein 2-like (482 aa).

Phosphoserine occurs at positions 31, 86, and 88. The residue at position 91 (Thr-91) is a Phosphothreonine. Lys-196 is covalently cross-linked (Glycyl lysine isopeptide (Lys-Gly) (interchain with G-Cter in SUMO2)). The span at 198 to 214 (GRKERMECETDEQKQGS) shows a compositional bias: basic and acidic residues. Disordered stretches follow at residues 198 to 247 (GRKE…DDEQ) and 413 to 482 (KRKR…PGYS). Residues 220–230 (ECETSSVCSSS) are compositionally biased toward low complexity. The span at 439–450 (TPASQAPKSPSS) shows a compositional bias: polar residues. Phosphoserine is present on residues Ser-447 and Ser-449. Low complexity predominate over residues 456–469 (TSAAEKATDATTAT).

The chain is G patch domain-containing protein 2-like (GPATCH2L) from Homo sapiens (Human).